The sequence spans 319 residues: Lipoyl synthase (319 aa).

The tract at residues 1–24 is disordered; it reads MAVVIDTVGARPRHPEKQANPDTP. Residues 13-24 show a composition bias toward basic and acidic residues; it reads RHPEKQANPDTP. 7 residues coordinate [4Fe-4S] cluster: C58, C63, C69, C84, C88, C91, and S298. The Radical SAM core domain maps to 70-287; that stretch reads WDKSHATFMI…EEIARAKGFL (218 aa).

This sequence belongs to the radical SAM superfamily. Lipoyl synthase family. The cofactor is [4Fe-4S] cluster.

The protein localises to the cytoplasm. It catalyses the reaction [[Fe-S] cluster scaffold protein carrying a second [4Fe-4S](2+) cluster] + N(6)-octanoyl-L-lysyl-[protein] + 2 oxidized [2Fe-2S]-[ferredoxin] + 2 S-adenosyl-L-methionine + 4 H(+) = [[Fe-S] cluster scaffold protein] + N(6)-[(R)-dihydrolipoyl]-L-lysyl-[protein] + 4 Fe(3+) + 2 hydrogen sulfide + 2 5'-deoxyadenosine + 2 L-methionine + 2 reduced [2Fe-2S]-[ferredoxin]. It functions in the pathway protein modification; protein lipoylation via endogenous pathway; protein N(6)-(lipoyl)lysine from octanoyl-[acyl-carrier-protein]: step 2/2. Catalyzes the radical-mediated insertion of two sulfur atoms into the C-6 and C-8 positions of the octanoyl moiety bound to the lipoyl domains of lipoate-dependent enzymes, thereby converting the octanoylated domains into lipoylated derivatives. The protein is Lipoyl synthase of Phenylobacterium zucineum (strain HLK1).